The following is a 435-amino-acid chain: Aspartate--tRNA(Asp/Asn) ligase (435 aa).

Glu163 is a binding site for L-aspartate. The aspartate stretch occupies residues 185-188 (QLYK). Arg206 lines the L-aspartate pocket. Residues 206-208 (RAE), 214-216 (RHL), and Glu358 each bind ATP. Positions 361 and 365 each coordinate L-aspartate. 406–409 (GAER) contributes to the ATP binding site.

It belongs to the class-II aminoacyl-tRNA synthetase family. Type 2 subfamily. Homodimer.

The protein localises to the cytoplasm. It catalyses the reaction tRNA(Asx) + L-aspartate + ATP = L-aspartyl-tRNA(Asx) + AMP + diphosphate. Functionally, aspartyl-tRNA synthetase with relaxed tRNA specificity since it is able to aspartylate not only its cognate tRNA(Asp) but also tRNA(Asn). Reaction proceeds in two steps: L-aspartate is first activated by ATP to form Asp-AMP and then transferred to the acceptor end of tRNA(Asp/Asn). Is slightly more efficient at aminoacylating tRNA(Asn) over tRNA(Asp). This is Aspartate--tRNA(Asp/Asn) ligase (aspS2) from Deinococcus radiodurans (strain ATCC 13939 / DSM 20539 / JCM 16871 / CCUG 27074 / LMG 4051 / NBRC 15346 / NCIMB 9279 / VKM B-1422 / R1).